The following is a 420-amino-acid chain: L-cysteine:1D-myo-inositol 2-amino-2-deoxy-alpha-D-glucopyranoside ligase (420 aa).

C43 is a Zn(2+) binding site. Residues 43–46 (CGIT), T58, and 81–83 (NIT) contribute to the L-cysteinyl-5'-AMP site. Residues 45-55 (ITPYDATHLGH) carry the 'HIGH' region motif. Positions 187 to 192 (ERGGDP) match the 'ERGGDP' region motif. Residue W227 participates in L-cysteinyl-5'-AMP binding. C231 contacts Zn(2+). 249-251 (GSD) serves as a coordination point for L-cysteinyl-5'-AMP. H256 is a binding site for Zn(2+). Residue I289 participates in L-cysteinyl-5'-AMP binding. The 'KMSKS' region signature appears at 295-299 (KMSKS).

The protein belongs to the class-I aminoacyl-tRNA synthetase family. MshC subfamily. Monomer. The cofactor is Zn(2+).

It carries out the reaction 1D-myo-inositol 2-amino-2-deoxy-alpha-D-glucopyranoside + L-cysteine + ATP = 1D-myo-inositol 2-(L-cysteinylamino)-2-deoxy-alpha-D-glucopyranoside + AMP + diphosphate + H(+). Its function is as follows. Catalyzes the ATP-dependent condensation of GlcN-Ins and L-cysteine to form L-Cys-GlcN-Ins. This chain is L-cysteine:1D-myo-inositol 2-amino-2-deoxy-alpha-D-glucopyranoside ligase, found in Segniliparus rotundus (strain ATCC BAA-972 / CDC 1076 / CIP 108378 / DSM 44985 / JCM 13578).